A 97-amino-acid polypeptide reads, in one-letter code: Plasmid stability protein StbC (97 aa).

Its function is as follows. Involved in plasmid stability. This Pseudomonas syringae pv. tomato (strain ATCC BAA-871 / DC3000) protein is Plasmid stability protein StbC (stbC).